Consider the following 836-residue polypeptide: Conserved oligomeric Golgi complex subunit 7 (836 aa).

2 coiled-coil regions span residues 29-49 and 107-127; these read QDSL…ASEE and LARV…LQDA. A disordered region spans residues 246–265; the sequence is KLANERSESQRLSSGDEFQS.

This sequence belongs to the COG7 family. As to quaternary structure, component of the conserved oligomeric Golgi complex which is composed of eight different subunits and is required for normal Golgi morphology and localization. Interacts with COG5 and COG6.

It is found in the golgi apparatus membrane. Its function is as follows. Required for normal Golgi function. Necessary for embryo development and pigmentation, especially for the expansion of cells and organs, and for the formation of the organized shoot apical meristem (SAM). Probably involved in the generation of the extra-cellular matrix. The chain is Conserved oligomeric Golgi complex subunit 7 from Arabidopsis thaliana (Mouse-ear cress).